Consider the following 468-residue polypeptide: MPRLLTPQTPVHFIGVGGIGMSALAKILVDRGHPVSGSDPRDNPTVQHLESRGVTVFKEQTAECIQSVLATNQQPPVVVISTAIPDTNPELENARAHQLAIWHRSDLLAALIDQQASIAVAGSHGKTTTSTLITTLLIEAGEDPTAVIGGVVPCLGSNGHSGQGRLLVAEADESDGSLVKFRPSLGVITNLELDHTDHYDGLDDLISTLQRFGGGCERLIANYDDPILQEHFEPTAWWSNKQSENIAFAALPLQLDGDRCTARFYENGSAVGDFTLPMAGLHNLSNATAALAACRMEGIPFEALVEGLAQLQAPGRRFDLRGTWEGRHIVDDYAHHPSEVRATLTMAQLMVSSGRSPLPSPPQRLVAVFQPHRFSRTQQFFEAFAEALQNCDALLLAPVYAAGEQTIPGVCSNALAQRIRSLRPDLEIEVAENLNQLTDLVKQRSRPDDLVLAMGAGTVNSLWGRLTE.

Residue 122 to 128 (GSHGKTT) participates in ATP binding.

It belongs to the MurCDEF family.

It is found in the cytoplasm. It carries out the reaction UDP-N-acetyl-alpha-D-muramate + L-alanine + ATP = UDP-N-acetyl-alpha-D-muramoyl-L-alanine + ADP + phosphate + H(+). It participates in cell wall biogenesis; peptidoglycan biosynthesis. Functionally, cell wall formation. This Synechococcus sp. (strain CC9902) protein is UDP-N-acetylmuramate--L-alanine ligase.